A 730-amino-acid chain; its full sequence is Catalase R (730 aa).

Residue His105 is part of the active site. Tyr392 is a heme binding site. Residues 403–433 form a disordered region; sequence PNFEQIPVNRPRKPVHNNNRDGFGQQQIPTN.

The protein belongs to the catalase family. Heme serves as cofactor.

The enzyme catalyses 2 H2O2 = O2 + 2 H2O. In terms of biological role, occurs in almost all aerobically respiring organisms and serves to protect cells from the toxic effects of hydrogen peroxide. The chain is Catalase R (catR) from Aspergillus niger.